A 423-amino-acid chain; its full sequence is Gamma-glutamyl phosphate reductase 2 (423 aa).

It belongs to the gamma-glutamyl phosphate reductase family.

It localises to the cytoplasm. It catalyses the reaction L-glutamate 5-semialdehyde + phosphate + NADP(+) = L-glutamyl 5-phosphate + NADPH + H(+). The protein operates within amino-acid biosynthesis; L-proline biosynthesis; L-glutamate 5-semialdehyde from L-glutamate: step 2/2. Catalyzes the NADPH-dependent reduction of L-glutamate 5-phosphate into L-glutamate 5-semialdehyde and phosphate. The product spontaneously undergoes cyclization to form 1-pyrroline-5-carboxylate. The protein is Gamma-glutamyl phosphate reductase 2 of Bacillus licheniformis (strain ATCC 14580 / DSM 13 / JCM 2505 / CCUG 7422 / NBRC 12200 / NCIMB 9375 / NCTC 10341 / NRRL NRS-1264 / Gibson 46).